A 160-amino-acid polypeptide reads, in one-letter code: Globin-like protein (160 aa).

The Globin domain maps to 2–152 (SMTRQEIQDL…FNAECQVHLK (151 aa)). His101 serves as a coordination point for heme.

This sequence belongs to the globin family.

The protein localises to the cytoplasm. In terms of biological role, may be a globin and may play a role in oxygen transport. This Caenorhabditis briggsae protein is Globin-like protein (glb-1).